The chain runs to 132 residues: Replication enhancer protein (132 aa).

It belongs to the geminiviridae replication enhancer protein family. Homooligomer. Interacts with the replication-associated protein (REP). Interacts with host proliferating cell nuclear antigen (PCNA). Interacts with host retinoblastoma-related protein 1 (RBR1), and may thereby deregulate the host cell cycle. Oligomerization and interaction with PCNA are necessary for optimal replication enhancement.

Increases viral DNA accumulation. Enhances infectivity and symptom expression. This Pepper huasteco yellow vein virus (PHYVV) protein is Replication enhancer protein.